The chain runs to 464 residues: Asparagine--tRNA ligase (464 aa).

This sequence belongs to the class-II aminoacyl-tRNA synthetase family. As to quaternary structure, homodimer.

Its subcellular location is the cytoplasm. It carries out the reaction tRNA(Asn) + L-asparagine + ATP = L-asparaginyl-tRNA(Asn) + AMP + diphosphate + H(+). This is Asparagine--tRNA ligase from Azobacteroides pseudotrichonymphae genomovar. CFP2.